Here is a 118-residue protein sequence, read N- to C-terminus: Large ribosomal subunit protein bL20 (118 aa).

This sequence belongs to the bacterial ribosomal protein bL20 family.

In terms of biological role, binds directly to 23S ribosomal RNA and is necessary for the in vitro assembly process of the 50S ribosomal subunit. It is not involved in the protein synthesizing functions of that subunit. This is Large ribosomal subunit protein bL20 from Francisella tularensis subsp. holarctica (strain FTNF002-00 / FTA).